The following is a 530-amino-acid chain: Tegument protein UL21 homolog (530 aa).

This sequence belongs to the alphaherpesvirinae UL21 protein family. As to quaternary structure, interacts (via C-terminus) with UL16.

It localises to the virion tegument. The protein resides in the host cytoplasm. Its subcellular location is the host nucleus. In terms of biological role, may participate in DNA packaging/capsid maturation events. Promotes efficient incorporation of tegument proteins UL46, UL49, and US3 homologs into virions. May also play a role in capsid transport to the trans-Golgi network (TGN). The polypeptide is Tegument protein UL21 homolog (Equus caballus (Horse)).